A 344-amino-acid polypeptide reads, in one-letter code: Succinylglutamate desuccinylase (344 aa).

Zn(2+) contacts are provided by H63, E66, and H160. E224 is a catalytic residue.

The protein belongs to the AspA/AstE family. Succinylglutamate desuccinylase subfamily. Zn(2+) is required as a cofactor.

The enzyme catalyses N-succinyl-L-glutamate + H2O = L-glutamate + succinate. The protein operates within amino-acid degradation; L-arginine degradation via AST pathway; L-glutamate and succinate from L-arginine: step 5/5. Transforms N(2)-succinylglutamate into succinate and glutamate. In Shewanella sp. (strain MR-7), this protein is Succinylglutamate desuccinylase.